The primary structure comprises 469 residues: Septin homolog spn1 (469 aa).

Positions 1–58 (MASMVLADGMPTVKDDSTRSRGSDVDSFTSTDNVTQINVEAAISENKNEEKPIQDNSE) are disordered. Basic and acidic residues predominate over residues 13 to 24 (VKDDSTRSRGSD). Polar residues predominate over residues 26–38 (DSFTSTDNVTQIN). Residues 92-367 (QGFNFNVLVL…EAYRTERLLS (276 aa)) form the Septin-type G domain. A G1 motif region spans residues 102-109 (GESGSGKS). GTP contacts are provided by residues 102–109 (GESGSGKS), T139, G165, 244–252 (KADTLTDDE), and R317. A G3 motif region spans residues 162–165 (DTPG). The segment at 243-246 (AKAD) is G4 motif. Positions 383-469 (SAKLEEERAL…NEKSKRKFFK (87 aa)) form a coiled coil.

It belongs to the TRAFAC class TrmE-Era-EngA-EngB-Septin-like GTPase superfamily. Septin GTPase family. Component of the septin complex composed of two copies of each spn1, spn2, spn3 and spn4.

It localises to the cytoplasm. Its subcellular location is the cell cortex. Its function is as follows. Plays a role in the cell cycle. Involved in a late stage of septum formation leading to the separation of the daughter cells. The sequence is that of Septin homolog spn1 (spn1) from Schizosaccharomyces pombe (strain 972 / ATCC 24843) (Fission yeast).